We begin with the raw amino-acid sequence, 219 residues long: Thiamine-phosphate synthase (219 aa).

Residues 44 to 48 (QFREK) and asparagine 79 each bind 4-amino-2-methyl-5-(diphosphooxymethyl)pyrimidine. Mg(2+) is bound by residues aspartate 80 and aspartate 99. Serine 117 contacts 4-amino-2-methyl-5-(diphosphooxymethyl)pyrimidine. 143 to 145 (TST) provides a ligand contact to 2-[(2R,5Z)-2-carboxy-4-methylthiazol-5(2H)-ylidene]ethyl phosphate. Lysine 146 is a binding site for 4-amino-2-methyl-5-(diphosphooxymethyl)pyrimidine. Residues glycine 175 and 195-196 (IS) each bind 2-[(2R,5Z)-2-carboxy-4-methylthiazol-5(2H)-ylidene]ethyl phosphate.

The protein belongs to the thiamine-phosphate synthase family. The cofactor is Mg(2+).

The catalysed reaction is 2-[(2R,5Z)-2-carboxy-4-methylthiazol-5(2H)-ylidene]ethyl phosphate + 4-amino-2-methyl-5-(diphosphooxymethyl)pyrimidine + 2 H(+) = thiamine phosphate + CO2 + diphosphate. It carries out the reaction 2-(2-carboxy-4-methylthiazol-5-yl)ethyl phosphate + 4-amino-2-methyl-5-(diphosphooxymethyl)pyrimidine + 2 H(+) = thiamine phosphate + CO2 + diphosphate. It catalyses the reaction 4-methyl-5-(2-phosphooxyethyl)-thiazole + 4-amino-2-methyl-5-(diphosphooxymethyl)pyrimidine + H(+) = thiamine phosphate + diphosphate. Its pathway is cofactor biosynthesis; thiamine diphosphate biosynthesis; thiamine phosphate from 4-amino-2-methyl-5-diphosphomethylpyrimidine and 4-methyl-5-(2-phosphoethyl)-thiazole: step 1/1. Its function is as follows. Condenses 4-methyl-5-(beta-hydroxyethyl)thiazole monophosphate (THZ-P) and 2-methyl-4-amino-5-hydroxymethyl pyrimidine pyrophosphate (HMP-PP) to form thiamine monophosphate (TMP). This Bacillus thuringiensis (strain Al Hakam) protein is Thiamine-phosphate synthase.